A 290-amino-acid polypeptide reads, in one-letter code: Nucleotide-binding protein BAV3158 (290 aa).

Gly9–Ser16 contributes to the ATP binding site. Residue Asp58–Ser61 participates in GTP binding.

Belongs to the RapZ-like family.

Functionally, displays ATPase and GTPase activities. In Bordetella avium (strain 197N), this protein is Nucleotide-binding protein BAV3158.